The chain runs to 190 residues: Succinate dehydrogenase assembly factor 2, mitochondrial (190 aa).

The protein belongs to the SDHAF2 family. Interacts with the flavoprotein subunit within the SDH catalytic dimer.

It is found in the mitochondrion matrix. Functionally, plays an essential role in the assembly of succinate dehydrogenase (SDH), an enzyme complex (also referred to as respiratory complex II) that is a component of both the tricarboxylic acid (TCA) cycle and the mitochondrial electron transport chain, and which couples the oxidation of succinate to fumarate with the reduction of ubiquinone (coenzyme Q) to ubiquinol. Required for flavinylation (covalent attachment of FAD) of the flavoprotein subunit of the SDH catalytic dimer. This Komagataella phaffii (strain GS115 / ATCC 20864) (Yeast) protein is Succinate dehydrogenase assembly factor 2, mitochondrial.